The following is a 247-amino-acid chain: Phosphoribosylaminoimidazole-succinocarboxamide synthase (247 aa).

It belongs to the SAICAR synthetase family.

The catalysed reaction is 5-amino-1-(5-phospho-D-ribosyl)imidazole-4-carboxylate + L-aspartate + ATP = (2S)-2-[5-amino-1-(5-phospho-beta-D-ribosyl)imidazole-4-carboxamido]succinate + ADP + phosphate + 2 H(+). It participates in purine metabolism; IMP biosynthesis via de novo pathway; 5-amino-1-(5-phospho-D-ribosyl)imidazole-4-carboxamide from 5-amino-1-(5-phospho-D-ribosyl)imidazole-4-carboxylate: step 1/2. In Prochlorococcus marinus (strain NATL1A), this protein is Phosphoribosylaminoimidazole-succinocarboxamide synthase.